A 915-amino-acid polypeptide reads, in one-letter code: Metabotropic glutamate receptor 7 (915 aa).

The first 34 residues, 1-34, serve as a signal peptide directing secretion; that stretch reads MVQLGKLLRVLTLMKFPCCVLEVLLCVLAAAARG. Residues 35–590 are Extracellular-facing; sequence QEMYAPHSIR…IIKLEWHSPW (556 aa). A disulfide bridge connects residues Cys-67 and Cys-109. The N-linked (GlcNAc...) asparagine glycan is linked to Asn-98. Residues Ser-159, 180–182, Tyr-230, and Asp-314 contribute to the L-glutamate site; that span reads AST. 7 disulfides stabilise this stretch: Cys-249–Cys-541, Cys-374–Cys-390, Cys-430–Cys-437, Cys-523–Cys-542, Cys-527–Cys-545, Cys-548–Cys-560, and Cys-563–Cys-576. L-glutamate is bound at residue Lys-407. Residues Asn-458 and Asn-486 are each glycosylated (N-linked (GlcNAc...) asparagine). A glycan (N-linked (GlcNAc...) asparagine) is linked at Asn-572. Residues 591–615 form a helical membrane-spanning segment; sequence AVIPVFLAMLGIIATIFVMATFIRY. At 616–627 the chain is on the cytoplasmic side; that stretch reads NDTPIVRASGRE. A helical transmembrane segment spans residues 628-648; it reads LSYVLLTGIFLCYIITFLMIA. Residues 649-654 are Extracellular-facing; the sequence is KPDVAV. Residues 655–675 traverse the membrane as a helical segment; it reads CSFRRVFLGLGMCISYAALLT. Topologically, residues 676–702 are cytoplasmic; it reads KTNRIYRIFEQGKKSVTAPRLISPTSQ. Residues 703–723 form a helical membrane-spanning segment; that stretch reads LAITSSLISVQLLGVFIWFGV. At 724–753 the chain is on the extracellular side; sequence DPPNIIIDYDEHKTMNPEQARGVLKCDITD. A helical membrane pass occupies residues 754–775; it reads LQIICSLGYSILLMVTCTVYAI. The Cytoplasmic portion of the chain corresponds to 776 to 788; it reads KTRGVPENFNEAK. A helical membrane pass occupies residues 789–810; sequence PIGFTMYTTCIVWLAFIPIFFG. The Extracellular portion of the chain corresponds to 811 to 825; sequence TAQSAEKLYIQTTTL. Residues 826 to 850 traverse the membrane as a helical segment; sequence TISMNLSASVALGMLYMPKVYIIIF. The Cytoplasmic portion of the chain corresponds to 851-915; it reads HPELNVQKRK…KYVSYNNLVI (65 aa). A disordered region spans residues 874–895; the sequence is SRLSHKPSDRPNGEAKTELCEN. The span at 879–892 shows a compositional bias: basic and acidic residues; it reads KPSDRPNGEAKTEL. The residue at position 900 (Ser-900) is a Phosphoserine.

It belongs to the G-protein coupled receptor 3 family. As to quaternary structure, homodimer. Interacts with PICK1.

Its subcellular location is the cell membrane. Functionally, G-protein coupled receptor activated by glutamate that regulates axon outgrowth through the MAPK-cAMP-PKA signaling pathway during neuronal development. Ligand binding causes a conformation change that triggers signaling via guanine nucleotide-binding proteins (G proteins) and modulates the activity of downstream effectors, such as adenylate cyclase that it inhibits. The chain is Metabotropic glutamate receptor 7 (Grm7) from Mus musculus (Mouse).